The sequence spans 305 residues: Homoserine O-acetyltransferase (305 aa).

Catalysis depends on Cys142, which acts as the Acyl-thioester intermediate. Positions 163 and 192 each coordinate substrate. His235 serves as the catalytic Proton acceptor. The active site involves Glu237. Position 249 (Arg249) interacts with substrate.

The protein belongs to the MetA family.

The protein localises to the cytoplasm. It carries out the reaction L-homoserine + acetyl-CoA = O-acetyl-L-homoserine + CoA. Its pathway is amino-acid biosynthesis; L-methionine biosynthesis via de novo pathway; O-acetyl-L-homoserine from L-homoserine: step 1/1. Functionally, transfers an acetyl group from acetyl-CoA to L-homoserine, forming acetyl-L-homoserine. The protein is Homoserine O-acetyltransferase of Cereibacter sphaeroides (strain ATCC 17025 / ATH 2.4.3) (Rhodobacter sphaeroides).